The sequence spans 359 residues: Phosphate acyltransferase (359 aa).

The disordered stretch occupies residues 337-359; the sequence is AAGAAQPAPETEVPGAHPSPHVA.

The protein belongs to the PlsX family. In terms of assembly, homodimer. Probably interacts with PlsY.

It is found in the cytoplasm. It catalyses the reaction a fatty acyl-[ACP] + phosphate = an acyl phosphate + holo-[ACP]. It functions in the pathway lipid metabolism; phospholipid metabolism. Catalyzes the reversible formation of acyl-phosphate (acyl-PO(4)) from acyl-[acyl-carrier-protein] (acyl-ACP). This enzyme utilizes acyl-ACP as fatty acyl donor, but not acyl-CoA. The sequence is that of Phosphate acyltransferase from Cupriavidus necator (strain ATCC 17699 / DSM 428 / KCTC 22496 / NCIMB 10442 / H16 / Stanier 337) (Ralstonia eutropha).